The chain runs to 975 residues: DNA primase (975 aa).

Residues 919 to 958 (CIQHDHRDGRENVQFFLDFRPESATTIWTTLWSRCFSRKC) form a CHC2-type zinc finger.

Belongs to the herpesviridae DNA primase family. As to quaternary structure, associates with the helicase and the primase-associated factor to form the helicase-primase factor.

The protein resides in the host nucleus. In terms of biological role, essential component of the helicase/primase complex. Unwinds the DNA at the replication forks and generates single-stranded DNA for both leading and lagging strand synthesis. The primase initiates primer synthesis and thereby produces large amount of short RNA primers on the lagging strand that the polymerase elongates using dNTPs. The polypeptide is DNA primase (Elephas maximus (Indian elephant)).